Here is a 55-residue protein sequence, read N- to C-terminus: HTH-type transcriptional regulator MerD (55 aa).

One can recognise an HTH merR-type domain in the interval 3-55 (AYTVSRLALDAGVSVHIVRDYLLRGLLRPVACTPGGYGLFDDAALQRLCFVRA). The segment at residues 6 to 25 (VSRLALDAGVSVHIVRDYLL) is a DNA-binding region (H-T-H motif).

In Pseudomonas fluorescens, this protein is HTH-type transcriptional regulator MerD (merD).